The chain runs to 416 residues: Adenylosuccinate synthetase (416 aa).

Residues 13–19 and 41–43 each bind GTP; these read GDEGKGK and GHT. Catalysis depends on Asp-14, which acts as the Proton acceptor. Mg(2+)-binding residues include Asp-14 and Gly-41. IMP is bound by residues 14 to 17, 39 to 42, Thr-126, Arg-140, Gln-220, Thr-235, and Arg-299; these read DEGK and NAGH. Residue His-42 is the Proton donor of the active site. 295–301 provides a ligand contact to substrate; sequence VSTGRKR. Residues Arg-301, 327–329, and 405–407 each bind GTP; these read KLD and STS.

This sequence belongs to the adenylosuccinate synthetase family. Homodimer. Mg(2+) serves as cofactor.

It localises to the cytoplasm. The enzyme catalyses IMP + L-aspartate + GTP = N(6)-(1,2-dicarboxyethyl)-AMP + GDP + phosphate + 2 H(+). The protein operates within purine metabolism; AMP biosynthesis via de novo pathway; AMP from IMP: step 1/2. In terms of biological role, plays an important role in the de novo pathway of purine nucleotide biosynthesis. Catalyzes the first committed step in the biosynthesis of AMP from IMP. In Campylobacter jejuni subsp. jejuni serotype O:2 (strain ATCC 700819 / NCTC 11168), this protein is Adenylosuccinate synthetase.